Here is a 995-residue protein sequence, read N- to C-terminus: DNA repair protein Rev1 (995 aa).

The BRCT domain occupies Arg35–Leu121. Disordered regions lie at residues Gly135–Lys164 and Val182–Arg211. The span at Lys136–Lys164 shows a compositional bias: basic and acidic residues. The segment covering Ala192–Arg211 has biased composition (low complexity). Positions Val275–Gly505 constitute a UmuC domain. Asp279 serves as a coordination point for Mg(2+). DCTP contacts are provided by residues Ser361–Arg367, Asn373, and Asp421. Asp421 contacts Mg(2+). Residue Glu422 is part of the active site. The tract at residues Ser696 to Ala868 is interaction with PolI. Positions Val878–Ser995 are interaction with PolH/DNApol-eta.

It belongs to the DNA polymerase type-Y family. Interacts (via C-terminus) with PolH/DNApol-eta (via C-terminal regions). Interacts (via C-terminus) with PolI. The cofactor is Mg(2+).

It localises to the nucleus. In terms of biological role, deoxycytidyl transferase involved in DNA repair. Transfers a dCMP residue from dCTP to the 3'-end of a DNA primer in a template-dependent reaction. May assist in the first step in the bypass of abasic lesions by the insertion of a nucleotide opposite the lesion. Required for normal induction of mutations by physical and chemical agents. During homologous recombination (HR) repair of DNA double-strand breaks (DSBs) regulates the extent of repair synthesis. Possibly recruits the DNA polymerase zeta complex or another translesion polymerase to early DSB repair intermediates to initiate repair synthesis, while also blocking the access of more processive polymerases preventing them from acting during the initial stages of HR repair. This chain is DNA repair protein Rev1, found in Drosophila melanogaster (Fruit fly).